The chain runs to 268 residues: GTP cyclohydrolase III (268 aa).

It belongs to the archaeal-type GTP cyclohydrolase family. In terms of assembly, homotrimer. Mg(2+) serves as cofactor.

It carries out the reaction GTP + 3 H2O = 2-amino-5-formylamino-6-(5-phospho-D-ribosylamino)pyrimidin-4(3H)-one + 2 phosphate + 2 H(+). Functionally, catalyzes the formation of 2-amino-5-formylamino-6-ribofuranosylamino-4(3H)-pyrimidinone ribonucleotide monophosphate and inorganic phosphate from GTP. Also has an independent pyrophosphate phosphohydrolase activity. This is GTP cyclohydrolase III (gch3) from Methanocaldococcus jannaschii (strain ATCC 43067 / DSM 2661 / JAL-1 / JCM 10045 / NBRC 100440) (Methanococcus jannaschii).